A 216-amino-acid polypeptide reads, in one-letter code: Adenylate kinase (216 aa).

Residue 10–15 participates in ATP binding; the sequence is GAGKGT. The NMP stretch occupies residues 30-59; sequence STGDMLRAAVSAQTEVGKRAKAVMDAGKLV. Residues T31, R36, 57 to 59, 85 to 88, and Q92 each bind AMP; these read KLV and GFPR. The LID stretch occupies residues 126–163; the sequence is GRYTCANCGTGYHDENLKPKVEGVCDKCGSTHFKRRPD. R127 serves as a coordination point for ATP. The Zn(2+) site is built by C130, C133, C150, and C153. AMP is bound by residues R160 and R172. ATP is bound at residue A200.

Belongs to the adenylate kinase family. Monomer.

It localises to the cytoplasm. The enzyme catalyses AMP + ATP = 2 ADP. The protein operates within purine metabolism; AMP biosynthesis via salvage pathway; AMP from ADP: step 1/1. Functionally, catalyzes the reversible transfer of the terminal phosphate group between ATP and AMP. Plays an important role in cellular energy homeostasis and in adenine nucleotide metabolism. The chain is Adenylate kinase from Allorhizobium ampelinum (strain ATCC BAA-846 / DSM 112012 / S4) (Agrobacterium vitis (strain S4)).